The sequence spans 432 residues: uncharacterized protein (432 aa).

This is an uncharacterized protein from Methanocaldococcus jannaschii (strain ATCC 43067 / DSM 2661 / JAL-1 / JCM 10045 / NBRC 100440) (Methanococcus jannaschii).